A 91-amino-acid polypeptide reads, in one-letter code: Large ribosomal subunit protein bL27 (91 aa).

The interval 1 to 24 is disordered; the sequence is MAHKKGVGSSRNGRDSNPKMRGVK.

Belongs to the bacterial ribosomal protein bL27 family.

This is Large ribosomal subunit protein bL27 from Chloroflexus aggregans (strain MD-66 / DSM 9485).